Here is a 155-residue protein sequence, read N- to C-terminus: MGVSVKPAARRNARQFALQAIYSWQLSKENVADIEEQFLTAEKYDEEEHHANEPKLQTPETDVAYFRDLFSGVALNHMKLDGKMRPYLSRPLQDLDQMELALLRMSIYEMMNRDDVPYKVVINEAIELAKVFAAEDSHKFVNGVLDKAAPTLRKK.

The protein belongs to the NusB family.

Involved in transcription antitermination. Required for transcription of ribosomal RNA (rRNA) genes. Binds specifically to the boxA antiterminator sequence of the ribosomal RNA (rrn) operons. This is Transcription antitermination protein NusB from Aliivibrio fischeri (strain ATCC 700601 / ES114) (Vibrio fischeri).